Consider the following 418-residue polypeptide: Glutamyl-tRNA reductase (418 aa).

Substrate-binding positions include 49–52, serine 109, 114–116, and glutamine 120; these read TCNR and EPQ. The active-site Nucleophile is the cysteine 50. 189 to 194 provides a ligand contact to NADP(+); that stretch reads GAGETI.

This sequence belongs to the glutamyl-tRNA reductase family. In terms of assembly, homodimer.

The catalysed reaction is (S)-4-amino-5-oxopentanoate + tRNA(Glu) + NADP(+) = L-glutamyl-tRNA(Glu) + NADPH + H(+). Its pathway is porphyrin-containing compound metabolism; protoporphyrin-IX biosynthesis; 5-aminolevulinate from L-glutamyl-tRNA(Glu): step 1/2. In terms of biological role, catalyzes the NADPH-dependent reduction of glutamyl-tRNA(Glu) to glutamate 1-semialdehyde (GSA). This Escherichia coli O9:H4 (strain HS) protein is Glutamyl-tRNA reductase.